A 486-amino-acid polypeptide reads, in one-letter code: Glycogen synthase 2 (486 aa).

Lys15 contributes to the ADP-alpha-D-glucose binding site.

Belongs to the glycosyltransferase 1 family. Bacterial/plant glycogen synthase subfamily.

The enzyme catalyses [(1-&gt;4)-alpha-D-glucosyl](n) + ADP-alpha-D-glucose = [(1-&gt;4)-alpha-D-glucosyl](n+1) + ADP + H(+). It participates in glycan biosynthesis; glycogen biosynthesis. Functionally, synthesizes alpha-1,4-glucan chains using ADP-glucose. In Rhizobium meliloti (strain 1021) (Ensifer meliloti), this protein is Glycogen synthase 2 (glgA2).